Consider the following 472-residue polypeptide: FAD-dependent monooxygenase ltmM (472 aa).

The chain crosses the membrane as a helical span at residues 7-27 (VIIVGGSVAGLSLAHCLEKIG). Glutamate 34, glycine 48, and arginine 107 together coordinate FAD. The N-linked (GlcNAc...) asparagine glycan is linked to asparagine 186. Residues aspartate 306 and alanine 319 each coordinate FAD. A helical transmembrane segment spans residues 450–470 (IVYALYLVAAAAFILYCLSSL).

It belongs to the paxM FAD-dependent monooxygenase family. Requires FAD as cofactor.

It localises to the membrane. Its pathway is secondary metabolite biosynthesis. Its function is as follows. FAD-dependent monooxygenase; part of the gene cluster that mediates the biosynthesis of lolitrems, indole-diterpene mycotoxins that are potent tremorgens in mammals, and are synthesized by clavicipitaceous fungal endophytes in association with their grass hosts. The geranylgeranyl diphosphate (GGPP) synthase ltmG is proposed to catalyze the first step in lolitrem biosynthesis. LtmG catalyzes a series of iterative condensations of isopentenyl diphosphate (IPP) with dimethylallyl diphosphate (DMAPP), geranyl diphosphate (GPP), and farnesyl diphosphate (FPP), to form GGPP. GGPP then condenses with indole-3-glycerol phosphate to form 3-geranylgeranylindole, an acyclic intermediate, to be incorporated into paxilline. Either ltmG or ltmC could be responsible for this step, as both are putative prenyl transferases. The FAD-dependent monooxygenase ltmM then catalyzes the epoxidation of the two terminal alkenes of the geranylgeranyl moiety, which is subsequently cyclized by ltmC, to paspaline. The cytochrome P450 monooxygenases ltmQ and ltmP can sequentially oxidize paspaline to terpendole E and terpendole F. Alternatively, ltmP converts paspaline to an intermediate which is oxidized by ltmQ to terpendole F. LtmF, ltmK, ltmE and ltmJ appear to be unique to the epichloe endophytes. The prenyltransferase ltmF is involved in the 27-hydroxyl-O-prenylation. The cytochrome P450 monooxygenase ltmK is required for the oxidative acetal ring formation. The multi-functional prenyltransferase ltmE is required for C20- and C21-prenylations of the indole ring of paspalanes and acts together with the cytochrome P450 monooxygenase ltmJ to yield lolitremanes by multiple oxidations and ring closures. The stereoisomer pairs of lolitriol and lolitrem N or lolitrem B and lolitrem F may be attributed to variations in the way in which ring closure can occur under the action of ltmJ. While the major product of this pathway is lolitrem B, the prenyl transferases and cytochrome P450 monooxygenases identified in this pathway have a remarkable versatility in their regio- and stereo-specificities to generate a diverse range of metabolites that are products of a metabolic grid rather than a linear pathway. In Epichloe festucae (strain Fl1), this protein is FAD-dependent monooxygenase ltmM (ltmM).